The chain runs to 262 residues: Hydroxyethylthiazole kinase (262 aa).

Position 43 (methionine 43) interacts with substrate. Arginine 118 and threonine 164 together coordinate ATP. Alanine 191 provides a ligand contact to substrate.

This sequence belongs to the Thz kinase family. It depends on Mg(2+) as a cofactor.

The catalysed reaction is 5-(2-hydroxyethyl)-4-methylthiazole + ATP = 4-methyl-5-(2-phosphooxyethyl)-thiazole + ADP + H(+). Its pathway is cofactor biosynthesis; thiamine diphosphate biosynthesis; 4-methyl-5-(2-phosphoethyl)-thiazole from 5-(2-hydroxyethyl)-4-methylthiazole: step 1/1. Its function is as follows. Catalyzes the phosphorylation of the hydroxyl group of 4-methyl-5-beta-hydroxyethylthiazole (THZ). The polypeptide is Hydroxyethylthiazole kinase (Cereibacter sphaeroides (strain ATCC 17029 / ATH 2.4.9) (Rhodobacter sphaeroides)).